The following is a 341-amino-acid chain: Phosphate acyltransferase (341 aa).

It belongs to the PlsX family. As to quaternary structure, homodimer. Probably interacts with PlsY.

The protein localises to the cytoplasm. It carries out the reaction a fatty acyl-[ACP] + phosphate = an acyl phosphate + holo-[ACP]. The protein operates within lipid metabolism; phospholipid metabolism. In terms of biological role, catalyzes the reversible formation of acyl-phosphate (acyl-PO(4)) from acyl-[acyl-carrier-protein] (acyl-ACP). This enzyme utilizes acyl-ACP as fatty acyl donor, but not acyl-CoA. The polypeptide is Phosphate acyltransferase (Chlorobaculum parvum (strain DSM 263 / NCIMB 8327) (Chlorobium vibrioforme subsp. thiosulfatophilum)).